Reading from the N-terminus, the 600-residue chain is Proline--tRNA ligase (600 aa).

This sequence belongs to the class-II aminoacyl-tRNA synthetase family. ProS type 1 subfamily. In terms of assembly, homodimer.

The protein localises to the cytoplasm. It catalyses the reaction tRNA(Pro) + L-proline + ATP = L-prolyl-tRNA(Pro) + AMP + diphosphate. Functionally, catalyzes the attachment of proline to tRNA(Pro) in a two-step reaction: proline is first activated by ATP to form Pro-AMP and then transferred to the acceptor end of tRNA(Pro). As ProRS can inadvertently accommodate and process non-cognate amino acids such as alanine and cysteine, to avoid such errors it has two additional distinct editing activities against alanine. One activity is designated as 'pretransfer' editing and involves the tRNA(Pro)-independent hydrolysis of activated Ala-AMP. The other activity is designated 'posttransfer' editing and involves deacylation of mischarged Ala-tRNA(Pro). The misacylated Cys-tRNA(Pro) is not edited by ProRS. This is Proline--tRNA ligase from Prochlorococcus marinus (strain MIT 9312).